The following is a 185-amino-acid chain: Elongation factor P (185 aa).

The protein belongs to the elongation factor P family.

It localises to the cytoplasm. It participates in protein biosynthesis; polypeptide chain elongation. Involved in peptide bond synthesis. Stimulates efficient translation and peptide-bond synthesis on native or reconstituted 70S ribosomes in vitro. Probably functions indirectly by altering the affinity of the ribosome for aminoacyl-tRNA, thus increasing their reactivity as acceptors for peptidyl transferase. In Herpetosiphon aurantiacus (strain ATCC 23779 / DSM 785 / 114-95), this protein is Elongation factor P.